The sequence spans 41 residues: Large ribosomal subunit protein bL36B (41 aa).

It belongs to the bacterial ribosomal protein bL36 family.

The polypeptide is Large ribosomal subunit protein bL36B (Vibrio campbellii (strain ATCC BAA-1116)).